Reading from the N-terminus, the 689-residue chain is Glycine--tRNA ligase beta subunit (689 aa).

It belongs to the class-II aminoacyl-tRNA synthetase family. As to quaternary structure, tetramer of two alpha and two beta subunits.

It localises to the cytoplasm. The enzyme catalyses tRNA(Gly) + glycine + ATP = glycyl-tRNA(Gly) + AMP + diphosphate. This Aeromonas salmonicida (strain A449) protein is Glycine--tRNA ligase beta subunit.